Consider the following 229-residue polypeptide: Internal virion protein gp7 (229 aa).

Positions 1–20 (MLYAFTLGRKLRGEEPSYPE) are cleaved as a propeptide — removed in mature form.

Belongs to the podoviruses gp7 family. As to quaternary structure, interacts with the internal virion protein gp20; this interaction forms a tube-like structure that may allow DNA ejection through the host membranes.

It localises to the virion. Functionally, inner capsid protein that plays a role in viral DNA ejection into the host cell. Assembles into an extracellular trans-envelope channel completed by the internal virion proteins gp7 and probably gp16. This channel allows the delivery of the viral genome into the cell cytoplasm. Displays membrane-association properties, may therefore form a simple channel spanning the outer membrane. In Salmonella phage P22 (Bacteriophage P22), this protein is Internal virion protein gp7 (7).